A 900-amino-acid polypeptide reads, in one-letter code: Alanine--tRNA ligase (900 aa).

Zn(2+) contacts are provided by H604, H608, C708, and H712.

Belongs to the class-II aminoacyl-tRNA synthetase family. The cofactor is Zn(2+).

It localises to the cytoplasm. It catalyses the reaction tRNA(Ala) + L-alanine + ATP = L-alanyl-tRNA(Ala) + AMP + diphosphate. Functionally, catalyzes the attachment of alanine to tRNA(Ala) in a two-step reaction: alanine is first activated by ATP to form Ala-AMP and then transferred to the acceptor end of tRNA(Ala). Also edits incorrectly charged Ser-tRNA(Ala) and Gly-tRNA(Ala) via its editing domain. This is Alanine--tRNA ligase from Saccharolobus islandicus (strain M.16.27) (Sulfolobus islandicus).